A 200-amino-acid chain; its full sequence is HVA22-like protein k (200 aa).

The tract at residues 176–200 (LGEIANGSPVSETNSDSESDSNHED) is disordered.

The protein belongs to the DP1 family.

The polypeptide is HVA22-like protein k (HVA22K) (Arabidopsis thaliana (Mouse-ear cress)).